The sequence spans 271 residues: GPN-loop GTPase 3 (271 aa).

Residue 13 to 18 (GVGKST) participates in GTP binding. Positions 70 to 72 (GPN) match the Gly-Pro-Asn (GPN)-loop; involved in dimer interface motif. 173–176 (SKMD) contacts GTP.

The protein belongs to the GPN-loop GTPase family. As to quaternary structure, heterodimers with GPN1 or GPN2. Binds to RNA polymerase II (RNAPII).

Its function is as follows. Small GTPase required for proper nuclear import of RNA polymerase II and III (RNAPII and RNAPIII). May act at an RNAP assembly step prior to nuclear import. The polypeptide is GPN-loop GTPase 3 (Yarrowia lipolytica (strain CLIB 122 / E 150) (Yeast)).